A 64-amino-acid polypeptide reads, in one-letter code: MPKMKTNRGAAKRFKLKKNLIKRGSAFKSHILTKKSAKRKAGLNEPKYVNDANLDSIKKLLCMA.

This sequence belongs to the bacterial ribosomal protein bL35 family.

In Wolinella succinogenes (strain ATCC 29543 / DSM 1740 / CCUG 13145 / JCM 31913 / LMG 7466 / NCTC 11488 / FDC 602W) (Vibrio succinogenes), this protein is Large ribosomal subunit protein bL35.